Reading from the N-terminus, the 860-residue chain is Protein argonaute-2 (860 aa).

Tyrosine 2 carries the 3'-nitrotyrosine modification. Residues 230 to 349 (PVIEFVCEVL…LPLEVCNIVA (120 aa)) form the PAZ domain. Residues 312–317 (YFKDRH) are interaction with guide RNA. Serine 388 carries the phosphoserine modification. The 302-residue stretch at 518-819 (LVVVILPGKT…VAFRARYHLV (302 aa)) folds into the Piwi domain. Residues 525 to 567 (GKTPVYAEVKRVGDTVLGMATQCVQMKNVQRTTPQTLSNLCLK) are interaction with guide RNA. The interaction with GW182 family members stretch occupies residues 588–591 (FQQP). Position 598 (aspartate 598) interacts with a divalent metal cation. The segment at 651-661 (LIQFYKSTRFK) is interaction with GW182 family members. Position 670 (aspartate 670) interacts with a divalent metal cation. 4-hydroxyproline is present on proline 701. 3 interaction with guide RNA regions span residues 710–711 (KR), 754–762 (HAGIQGTSR), and 791–813 (YVRC…VAFR). Histidine 808 is an a divalent metal cation binding site. 4 positions are modified to phosphoserine: serine 825, serine 829, serine 832, and serine 835.

It belongs to the argonaute family. Ago subfamily. In terms of assembly, interacts with DICER1 through its Piwi domain and with TARBP2 during assembly of the RNA-induced silencing complex (RISC). Together, DICER1, AGO2 and TARBP2 constitute the trimeric RISC loading complex (RLC), or micro-RNA (miRNA) loading complex (miRLC). Within the RLC/miRLC, DICER1 and TARBP2 are required to process precursor miRNAs (pre-miRNAs) to mature miRNAs and then load them onto AGO2. AGO2 bound to the mature miRNA constitutes the minimal RISC and may subsequently dissociate from DICER1 and TARBP2. Note however that the term RISC has also been used to describe the trimeric RLC/miRLC. The formation of RISC complexes containing siRNAs rather than miRNAs appears to occur independently of DICER1. Interacts with AGO1. Also interacts with DDB1, DDX5, DDX6, DDX20, DHX30, DHX36, DDX47, DHX9, ELAVL, FXR1, GEMIN4, HNRNPF, IGF2BP1, ILF3, IMP8, MATR3, PABPC1, PRMT5, P4HA1, P4HB, RBM4, SART3, TNRC6A, TNRC6B, UPF1 and YBX1. Interacts with the P-body components DCP1A and XRN1. Associates with polysomes and messenger ribonucleoproteins (mNRPs). Interacts with RBM4; the interaction is modulated under stress-induced conditions, occurs under both cell proliferation and differentiation conditions and in an RNA- and phosphorylation-independent manner. Interacts with LIMD1, WTIP and AJUBA. Interacts with TRIM71. Interacts with APOBEC3G in an RNA-dependent manner. Interacts with APOBEC3A, APOBEC3C, APOBEC3F and APOBEC3H. Interacts with DICER1, TARBP2, EIF6, MOV10 and RPL7A (60S ribosome subunit); they form a large RNA-induced silencing complex (RISC). Interacts with FMR1. Interacts with ZFP36. Interacts with RC3H1; the interaction is RNA independent. Interacts with ARB2A. Found in a complex composed of AGO2, CHD7 and ARB2A. Interacts with SND1 and SYT11. Interacts with CLNK. Interacts with GARRE1. Interacts with GRB2; this interaction is important for the formation of a ternary complex containing GRB2, AGO2 and DICER1. Requires Mg(2+) as cofactor. It depends on Mn(2+) as a cofactor. Post-translationally, hydroxylated. 4-hydroxylation appears to enhance protein stability but is not required for miRNA-binding or endonuclease activity. In terms of processing, ubiquitinated on surface-exposed lysines by a SCF-like E3 ubiquitin-protein ligase complex containing ZSWIM8 during target-directed microRNA degradation (TDMD), a process that mediates degradation of microRNAs (miRNAs). Ubiquitination by the SCF-like E3 ubiquitin-protein ligase complex containing ZSWIM8 leads to its subsequent degradation, thereby exposing miRNAs for degradation. ZSWIM8 recognizes and binds AGO2 when it is engaged with a TDMD target. Phosphorylation at Ser-388 by AKT3; leads to up-regulate translational repression of microRNA target and down-regulate endonucleolytic cleavage. Post-translationally, a phosphorylation cycle of C-terminal serine cluster (Ser-825-Ser-835) regulates the release of target mRNAs. Target-binding leads to phosphorylation of these residues by CSNK1A1, which reduces the affinity of AGO2 for mRNA and enables target release. The ANKRD52-PPP6C phosphatase complex dephosphorylates the residues, which primes AGO2 for binding a new target. In terms of tissue distribution, ubiquitous expression in 9.5 day embryos with highest levels in forebrain, heart, limb buds, and branchial arches.

It localises to the cytoplasm. The protein localises to the P-body. Its subcellular location is the nucleus. The catalysed reaction is Endonucleolytic cleavage to 5'-phosphomonoester.. In terms of biological role, required for RNA-mediated gene silencing (RNAi) by the RNA-induced silencing complex (RISC). The 'minimal RISC' appears to include AGO2 bound to a short guide RNA such as a microRNA (miRNA) or short interfering RNA (siRNA). These guide RNAs direct RISC to complementary mRNAs that are targets for RISC-mediated gene silencing. The precise mechanism of gene silencing depends on the degree of complementarity between the miRNA or siRNA and its target. Binding of RISC to a perfectly complementary mRNA generally results in silencing due to endonucleolytic cleavage of the mRNA specifically by AGO2. Binding of RISC to a partially complementary mRNA results in silencing through inhibition of translation, and this is independent of endonuclease activity. May inhibit translation initiation by binding to the 7-methylguanosine cap, thereby preventing the recruitment of the translation initiation factor eIF4-E. May also inhibit translation initiation via interaction with EIF6, which itself binds to the 60S ribosomal subunit and prevents its association with the 40S ribosomal subunit. The inhibition of translational initiation leads to the accumulation of the affected mRNA in cytoplasmic processing bodies (P-bodies), where mRNA degradation may subsequently occur. In some cases RISC-mediated translational repression is also observed for miRNAs that perfectly match the 3' untranslated region (3'-UTR). Can also up-regulate the translation of specific mRNAs under certain growth conditions. Binds to the AU element of the 3'-UTR of the TNF (TNF-alpha) mRNA and up-regulates translation under conditions of serum starvation. Also required for transcriptional gene silencing (TGS), in which short RNAs known as antigene RNAs or agRNAs direct the transcriptional repression of complementary promoter regions. Regulates lymphoid and erythroid development and function, and this is independent of endonuclease activity. This is Protein argonaute-2 (Ago2) from Mus musculus (Mouse).